Consider the following 364-residue polypeptide: Anionic peroxidase (364 aa).

A signal peptide spans 1–20 (MASFMKQLSLVLSFIALALA). Positions 21–66 (GCAVYQNTQTAMKDQLKVTPTWLDNTLKSTNLLSLGLGKPSGGKLG) are excised as a propeptide. The active-site Proton acceptor is the histidine 99. Ca(2+) is bound by residues aspartate 100, valine 103, glycine 105, and aspartate 107. A disulfide bridge connects residues cysteine 101 and cysteine 106. Residues asparagine 113, asparagine 188, asparagine 202, and asparagine 216 are each glycosylated (N-linked (GlcNAc...) asparagine). 2 disulfide bridges follow: cysteine 155/cysteine 343 and cysteine 234/cysteine 255. Histidine 227 contacts heme b. Residue threonine 228 coordinates Ca(2+). Residues asparagine 254 and asparagine 260 are each glycosylated (N-linked (GlcNAc...) asparagine). Ca(2+)-binding residues include aspartate 268, threonine 270, and aspartate 275. The N-linked (GlcNAc...) asparagine glycan is linked to asparagine 299.

Belongs to the peroxidase family. Classical plant (class III) peroxidase subfamily. The cofactor is Ca(2+). Heme b serves as cofactor. In terms of tissue distribution, highly expressed in suspension cultured cells and calli. Weak expression also found in the stems of intact plants. No expression in leaf, tuberous root and non-tuberous root.

The protein resides in the secreted. It catalyses the reaction 2 a phenolic donor + H2O2 = 2 a phenolic radical donor + 2 H2O. In terms of biological role, removal of H(2)O(2), oxidation of toxic reductants, biosynthesis and degradation of lignin, suberization, auxin catabolism, response to environmental stresses such as wounding, pathogen attack and oxidative stress. These functions might be dependent on each isozyme/isoform in each plant tissue. May contribute to protection against cold-induced oxidative stress. The chain is Anionic peroxidase from Ipomoea batatas (Sweet potato).